A 160-amino-acid polypeptide reads, in one-letter code: 6,7-dimethyl-8-ribityllumazine synthase (160 aa).

Residues phenylalanine 28, 62-64, and 86-88 contribute to the 5-amino-6-(D-ribitylamino)uracil site; these read ALE and AVI. 91-92 is a binding site for (2S)-2-hydroxy-3-oxobutyl phosphate; sequence ET. Histidine 94 (proton donor) is an active-site residue. Asparagine 119 provides a ligand contact to 5-amino-6-(D-ribitylamino)uracil. Residue arginine 133 coordinates (2S)-2-hydroxy-3-oxobutyl phosphate.

It belongs to the DMRL synthase family.

It carries out the reaction (2S)-2-hydroxy-3-oxobutyl phosphate + 5-amino-6-(D-ribitylamino)uracil = 6,7-dimethyl-8-(1-D-ribityl)lumazine + phosphate + 2 H2O + H(+). The protein operates within cofactor biosynthesis; riboflavin biosynthesis; riboflavin from 2-hydroxy-3-oxobutyl phosphate and 5-amino-6-(D-ribitylamino)uracil: step 1/2. In terms of biological role, catalyzes the formation of 6,7-dimethyl-8-ribityllumazine by condensation of 5-amino-6-(D-ribitylamino)uracil with 3,4-dihydroxy-2-butanone 4-phosphate. This is the penultimate step in the biosynthesis of riboflavin. The polypeptide is 6,7-dimethyl-8-ribityllumazine synthase (Nitrosospira multiformis (strain ATCC 25196 / NCIMB 11849 / C 71)).